The sequence spans 451 residues: Tubulin alpha-2 chain (451 aa).

Glutamine 11 contributes to the GTP binding site. The residue at position 40 (lysine 40) is an N6-acetyllysine. Residues glutamate 71, glycine 144, threonine 145, threonine 179, asparagine 206, and asparagine 228 each contribute to the GTP site. Glutamate 71 contributes to the Mg(2+) binding site. Residue glutamate 254 is part of the active site.

Belongs to the tubulin family. In terms of assembly, dimer of alpha and beta chains. A typical microtubule is a hollow water-filled tube with an outer diameter of 25 nm and an inner diameter of 15 nM. Alpha-beta heterodimers associate head-to-tail to form protofilaments running lengthwise along the microtubule wall with the beta-tubulin subunit facing the microtubule plus end conferring a structural polarity. Microtubules usually have 13 protofilaments but different protofilament numbers can be found in some organisms and specialized cells. The cofactor is Mg(2+). Post-translationally, undergoes a tyrosination/detyrosination cycle, the cyclic removal and re-addition of a C-terminal tyrosine residue by the enzymes tubulin tyrosine carboxypeptidase (TTCP) and tubulin tyrosine ligase (TTL), respectively. In terms of processing, acetylation of alpha chains at Lys-40 stabilizes microtubules and affects affinity and processivity of microtubule motors. This modification has a role in multiple cellular functions, ranging from cell motility, cell cycle progression or cell differentiation to intracellular trafficking and signaling.

The protein resides in the cytoplasm. Its subcellular location is the cytoskeleton. The catalysed reaction is GTP + H2O = GDP + phosphate + H(+). Functionally, tubulin is the major constituent of microtubules, a cylinder consisting of laterally associated linear protofilaments composed of alpha- and beta-tubulin heterodimers. Microtubules grow by the addition of GTP-tubulin dimers to the microtubule end, where a stabilizing cap forms. Below the cap, tubulin dimers are in GDP-bound state, owing to GTPase activity of alpha-tubulin. The protein is Tubulin alpha-2 chain (TUBA2) of Zea mays (Maize).